Reading from the N-terminus, the 424-residue chain is Serine/threonine-protein kinase H1 (424 aa).

Glycine 2 carries the N-myristoyl glycine lipid modification. A lipid anchor (S-palmitoyl cysteine) is attached at cysteine 3. The disordered stretch occupies residues 49 to 81; the sequence is KGGFPAASQGANPSPGTPRTSHTEPPSEPPRRA. The segment covering 57–72 has biased composition (polar residues); it reads QGANPSPGTPRTSHTE. The region spanning 98–355 is the Protein kinase domain; that stretch reads YDIKALIGRG…ALQALRHPWV (258 aa). ATP is bound by residues 104-112 and lysine 127; that span reads IGRGSFSRV. Aspartate 218 functions as the Proton acceptor in the catalytic mechanism. The interval 378-407 is disordered; that stretch reads RASSRCQSTKSAQSTRSSRSTRSNKSRRVR. 2 positions are modified to phosphoserine; by autocatalysis: serine 380 and serine 381. Positions 385-398 are enriched in low complexity; the sequence is STKSAQSTRSSRST.

This sequence belongs to the protein kinase superfamily. CAMK Ser/Thr protein kinase family. As to quaternary structure, homodimer. Autophosphorylated on serine residues. In terms of processing, myristoylated. Required for membrane association. Prerequisite for palmitoylation to occur. Post-translationally, palmitoylated.

The protein localises to the golgi apparatus. It is found in the cytoplasm. Its subcellular location is the cytoskeleton. It localises to the microtubule organizing center. The protein resides in the centrosome. The protein localises to the nucleus speckle. It is found in the endoplasmic reticulum membrane. Its subcellular location is the cell membrane. It catalyses the reaction L-seryl-[protein] + ATP = O-phospho-L-seryl-[protein] + ADP + H(+). The catalysed reaction is L-threonyl-[protein] + ATP = O-phospho-L-threonyl-[protein] + ADP + H(+). With respect to regulation, activity depends on Ca(2+) concentration. Its function is as follows. May be a SFC-associated serine kinase (splicing factor compartment-associated serine kinase) with a role in intranuclear SR protein (non-snRNP splicing factors containing a serine/arginine-rich domain) trafficking and pre-mRNA processing. The polypeptide is Serine/threonine-protein kinase H1 (PSKH1) (Bos taurus (Bovine)).